Consider the following 132-residue polypeptide: Small ribosomal subunit protein uS8c (132 aa).

The protein belongs to the universal ribosomal protein uS8 family. As to quaternary structure, part of the 30S ribosomal subunit.

It is found in the plastid. The protein localises to the chloroplast. In terms of biological role, one of the primary rRNA binding proteins, it binds directly to 16S rRNA central domain where it helps coordinate assembly of the platform of the 30S subunit. In Platanus occidentalis (Sycamore), this protein is Small ribosomal subunit protein uS8c (rps8).